The chain runs to 159 residues: Protein-export protein SecB (159 aa).

This sequence belongs to the SecB family. As to quaternary structure, homotetramer, a dimer of dimers. One homotetramer interacts with 1 SecA dimer.

The protein localises to the cytoplasm. One of the proteins required for the normal export of preproteins out of the cell cytoplasm. It is a molecular chaperone that binds to a subset of precursor proteins, maintaining them in a translocation-competent state. It also specifically binds to its receptor SecA. The polypeptide is Protein-export protein SecB (Nitrobacter hamburgensis (strain DSM 10229 / NCIMB 13809 / X14)).